Here is an 80-residue protein sequence, read N- to C-terminus: Conotoxin SmIVA (80 aa).

An N-terminal signal peptide occupies residues 1-21 (MGMRMMFTVFLLVVLATTVVS). Residues 22 to 38 (IPSDRASDGRNAAVNER) constitute a propeptide that is removed on maturation. Pyrrolidone carboxylic acid is present on Gln39. O-linked (HexNAc...) serine glycosylation is present at Ser45. 4-hydroxyproline occurs at positions 55, 60, 70, and 72. Ser75 carries the post-translational modification Serine amide. A propeptide spanning residues 76–80 (GRRND) is cleaved from the precursor.

Belongs to the conotoxin A superfamily. Contains 3 disulfide bonds. Expressed by the venom duct.

Its subcellular location is the secreted. In terms of biological role, neurotoxin with probable activity on sodium channel. Induces intense repetitive firing of the frog neuromuscular junction, leading to a tetanic contracture in muscle fiber (spastic paralysis). In vivo, shows the same effect as the whole venom when injected on fish prey. In Conus stercusmuscarum (Fly-specked cone), this protein is Conotoxin SmIVA.